The primary structure comprises 436 residues: Ribosomal protein uS12 methylthiotransferase RimO (436 aa).

One can recognise an MTTase N-terminal domain in the interval 2–117; that stretch reads RNVGIISLGC…IVDVIEEVKK (116 aa). [4Fe-4S] cluster-binding residues include Cys-11, Cys-47, Cys-80, Cys-154, Cys-158, and Cys-161. The 230-residue stretch at 140 to 369 folds into the Radical SAM core domain; that stretch reads TTPPYYAYLK…MEIQKQISYE (230 aa). The TRAM domain maps to 372 to 436; the sequence is MSKIGTKLEV…AFEYDLVGEY (65 aa).

Belongs to the methylthiotransferase family. RimO subfamily. The cofactor is [4Fe-4S] cluster.

It localises to the cytoplasm. It carries out the reaction L-aspartate(89)-[ribosomal protein uS12]-hydrogen + (sulfur carrier)-SH + AH2 + 2 S-adenosyl-L-methionine = 3-methylsulfanyl-L-aspartate(89)-[ribosomal protein uS12]-hydrogen + (sulfur carrier)-H + 5'-deoxyadenosine + L-methionine + A + S-adenosyl-L-homocysteine + 2 H(+). Functionally, catalyzes the methylthiolation of an aspartic acid residue of ribosomal protein uS12. The polypeptide is Ribosomal protein uS12 methylthiotransferase RimO (Caldanaerobacter subterraneus subsp. tengcongensis (strain DSM 15242 / JCM 11007 / NBRC 100824 / MB4) (Thermoanaerobacter tengcongensis)).